The chain runs to 785 residues: Mitochondrial intermediate peptidase (785 aa).

Residues 1–43 constitute a mitochondrion transit peptide; that stretch reads MLTRPAQNALLKSMQPLFRFRGCLLAKSTSTPRRDISTSSRKL. Residue His-567 coordinates Zn(2+). Glu-568 is a catalytic residue. His-571 and His-574 together coordinate Zn(2+).

This sequence belongs to the peptidase M3 family. Zn(2+) is required as a cofactor.

The protein localises to the mitochondrion matrix. The catalysed reaction is Release of an N-terminal octapeptide as second stage of processing of some proteins imported into the mitochondrion.. Its function is as follows. Cleaves proteins, imported into the mitochondrion, to their mature size. While most mitochondrial precursor proteins are processed to the mature form in one step by mitochondrial processing peptidase (MPP), the sequential cleavage by MIP of an octapeptide after initial processing by MPP is a required step for a subgroup of nuclear-encoded precursor proteins destined for the matrix or the inner membrane. The protein is Mitochondrial intermediate peptidase (OCT1) of Pleurotus djamor (Pink oyster mushroom).